The following is a 372-amino-acid chain: uncharacterized protein (372 aa).

Residues 224–244 (GSTVGVVIGVVIVIFIGFIII) form a helical membrane-spanning segment. At Ser-329 the chain carries Phosphoserine.

It is found in the vacuole membrane. This is an uncharacterized protein from Saccharomyces cerevisiae (strain ATCC 204508 / S288c) (Baker's yeast).